The sequence spans 213 residues: Octanoyltransferase (213 aa).

Residues 32-207 (NSTLDEIWLV…NILALLNNPD (176 aa)) form the BPL/LPL catalytic domain. Substrate-binding positions include 71–78 (RGGQVTYH), 138–140 (SLG), and 151–153 (GLA). The active-site Acyl-thioester intermediate is the cysteine 169.

This sequence belongs to the LipB family.

The protein localises to the cytoplasm. The enzyme catalyses octanoyl-[ACP] + L-lysyl-[protein] = N(6)-octanoyl-L-lysyl-[protein] + holo-[ACP] + H(+). It functions in the pathway protein modification; protein lipoylation via endogenous pathway; protein N(6)-(lipoyl)lysine from octanoyl-[acyl-carrier-protein]: step 1/2. Its function is as follows. Catalyzes the transfer of endogenously produced octanoic acid from octanoyl-acyl-carrier-protein onto the lipoyl domains of lipoate-dependent enzymes. Lipoyl-ACP can also act as a substrate although octanoyl-ACP is likely to be the physiological substrate. The protein is Octanoyltransferase of Shigella flexneri serotype 5b (strain 8401).